The primary structure comprises 790 residues: Alpha,alpha-trehalose-phosphate synthase [UDP-forming] B (790 aa).

In the N-terminal section; belongs to the glycosyltransferase 20 family. This sequence in the C-terminal section; belongs to the trehalose phosphatase family.

The catalysed reaction is D-glucose 6-phosphate + UDP-alpha-D-glucose = alpha,alpha-trehalose 6-phosphate + UDP + H(+). In terms of biological role, synthesizes trehalose 6-phosphate, the precursor for the production of trehalose, the main carbohydrate storage reserve of the dormant spore. Trehalose accumulates in both prestalk and prespore cells and then is rapidly metabolized during terminal differentiation of stalk cells, while being stored in spores, where it serves as the principal energy and carbon source for germination. The protein is Alpha,alpha-trehalose-phosphate synthase [UDP-forming] B (tpsB) of Dictyostelium discoideum (Social amoeba).